Here is a 96-residue protein sequence, read N- to C-terminus: Putative pterin-4-alpha-carbinolamine dehydratase (96 aa).

Belongs to the pterin-4-alpha-carbinolamine dehydratase family.

It catalyses the reaction (4aS,6R)-4a-hydroxy-L-erythro-5,6,7,8-tetrahydrobiopterin = (6R)-L-erythro-6,7-dihydrobiopterin + H2O. This is Putative pterin-4-alpha-carbinolamine dehydratase from Herpetosiphon aurantiacus (strain ATCC 23779 / DSM 785 / 114-95).